The chain runs to 223 residues: UPF0641 membrane protein PJ4664.05 (223 aa).

A run of 5 helical transmembrane segments spans residues 10–30 (FNSF…FNWI), 49–69 (LTVL…FSDI), 81–101 (ILLY…WSIV), 146–166 (LSIG…MLWV), and 190–210 (TIFY…LKMV).

The protein belongs to the UPF0641 family.

It localises to the endoplasmic reticulum membrane. In Schizosaccharomyces pombe (strain 972 / ATCC 24843) (Fission yeast), this protein is UPF0641 membrane protein PJ4664.05.